A 124-amino-acid chain; its full sequence is Large ribosomal subunit protein eL22z (124 aa).

It belongs to the eukaryotic ribosomal protein eL22 family.

The chain is Large ribosomal subunit protein eL22z (RPL22B) from Arabidopsis thaliana (Mouse-ear cress).